The sequence spans 413 residues: Eukaryotic initiation factor 4A-9 (413 aa).

A Q motif motif is present at residues 40–68 (HSFDAMGLKENLLRGIYAYGFEKPSAIQQ). Residues 71–241 (IVPFCKGLDV…RKFMNKPVRI (171 aa)) enclose the Helicase ATP-binding domain. Position 84 to 91 (84 to 91 (AQSGTGKT)) interacts with ATP. A DEAD box motif is present at residues 189-192 (DEAD). Positions 252–413 (GIKQFYVNVD…ELPANVADLL (162 aa)) constitute a Helicase C-terminal domain.

It belongs to the DEAD box helicase family. eIF4A subfamily. EIF4F is a multi-subunit complex, the composition of which varies with external and internal environmental conditions. It is composed of at least EIF4A, EIF4E and EIF4G.

The catalysed reaction is ATP + H2O = ADP + phosphate + H(+). ATP-dependent RNA helicase which is a subunit of the eIF4F complex involved in cap recognition and is required for mRNA binding to ribosome. In the current model of translation initiation, eIF4A unwinds RNA secondary structures in the 5'-UTR of mRNAs which is necessary to allow efficient binding of the small ribosomal subunit, and subsequent scanning for the initiator codon. The chain is Eukaryotic initiation factor 4A-9 from Nicotiana tabacum (Common tobacco).